Reading from the N-terminus, the 283-residue chain is Rhomboid-like protease 2 (283 aa).

A compositionally biased stretch (polar residues) spans Met1 to Ala11. The interval Met1 to Gly26 is disordered. 3 helical membrane passes run Ile62–Ala82, Ile114–Ile134, and Leu149–Phe169. Ser178 serves as the catalytic Nucleophile. A run of 4 helical transmembrane segments spans residues Thr179–Ile199, Ala205–Met225, Ser227–Asn247, and Leu260–Val280. The active site involves His230.

The protein belongs to the peptidase S54 family.

It is found in the membrane. It catalyses the reaction Cleaves type-1 transmembrane domains using a catalytic dyad composed of serine and histidine that are contributed by different transmembrane domains.. In terms of biological role, serine protease involved in intramembrane proteolysis and the subsequent release of polypeptides from their membrane anchors. The protein is Rhomboid-like protease 2 (ROM2) of Toxoplasma gondii.